The sequence spans 116 residues: Alpha-defensin 29 (116 aa).

Positions 1–19 (MKTLVLLSALVLPCFQVQA) are cleaved as a signal peptide. A propeptide spanning residues 20 to 60 (DPIQNTDEETKTEEQPEEEDQAVSVSFGGTEGSALQDVAQR) is cleaved from the precursor. The disordered stretch occupies residues 22–44 (IQNTDEETKTEEQPEEEDQAVSV). Tandem repeats lie at residues 65–67 (CRK), 68–70 (CRV), 71–73 (CQK), 74–76 (CQV), 77–79 (CQK), 80–82 (CPV), 83–85 (CPT), 86–88 (CPQ), and 89–91 (CPK). Positions 65 to 70 (CRKCRV) are 2 X 3 AA tandem repeats of C-R-X. The interval 71-79 (CQKCQVCQK) is 3 X 3 AA tandem repeats of C-Q-X. Residues 80 to 91 (CPVCPTCPQCPK) form a 4 X 3 AA tandem repeats of C-P-X region.

Belongs to the alpha-defensin family. Small bowel.

The protein resides in the secreted. Apparent precursor of a secreted, cationic, proline- and cysteine-rich peptide that contains Cys-Pro-Xaa repeats. Unlike cryptdin, the proposed mature peptide region lacks the structural motif characteristic of defensins. This chain is Alpha-defensin 29, found in Mus musculus (Mouse).